A 454-amino-acid polypeptide reads, in one-letter code: Histidine--tRNA ligase (454 aa).

This sequence belongs to the class-II aminoacyl-tRNA synthetase family. In terms of assembly, homodimer.

The protein resides in the cytoplasm. It carries out the reaction tRNA(His) + L-histidine + ATP = L-histidyl-tRNA(His) + AMP + diphosphate + H(+). This chain is Histidine--tRNA ligase, found in Bacteroides fragilis (strain ATCC 25285 / DSM 2151 / CCUG 4856 / JCM 11019 / LMG 10263 / NCTC 9343 / Onslow / VPI 2553 / EN-2).